The sequence spans 198 residues: Ribonuclease HII (198 aa).

An RNase H type-2 domain is found at 1 to 198; sequence MLCGIDEAGR…QRRSFFVKNL (198 aa). Positions 6, 7, and 112 each coordinate a divalent metal cation.

It belongs to the RNase HII family. Requires Mn(2+) as cofactor. The cofactor is Mg(2+).

Its subcellular location is the cytoplasm. The enzyme catalyses Endonucleolytic cleavage to 5'-phosphomonoester.. Functionally, endonuclease that specifically degrades the RNA of RNA-DNA hybrids. This is Ribonuclease HII from Treponema denticola (strain ATCC 35405 / DSM 14222 / CIP 103919 / JCM 8153 / KCTC 15104).